We begin with the raw amino-acid sequence, 329 residues long: R-linalool synthase (329 aa).

Residue Asp79 participates in Mg(2+) binding. Residues 79-83 (DDQFD) carry the DDXXD motif motif. Arg172 provides a ligand contact to substrate. Mg(2+) is bound by residues Asn218 and Ser222. The NXXXSXXXD motif motif lies at 218-226 (NELHSFEKD). Position 225 (Lys225) interacts with substrate. Asp226 provides a ligand contact to Mg(2+). Residue 308-309 (RY) participates in substrate binding.

Belongs to the terpene synthase family. Homodimer. It depends on Mg(2+) as a cofactor.

The catalysed reaction is (2E)-geranyl diphosphate + H2O = (R)-linalool + diphosphate. It carries out the reaction (2E,6E)-farnesyl diphosphate + H2O = (6E)-nerolidol + diphosphate. Its function is as follows. In vitro, catalyzes the formation of R-linalool from geranyl diphosphate (GPP). Can also accept farnesyl diphosphate (FPP) as substrate to produce trans-nerolidol. This is R-linalool synthase from Streptomyces clavuligerus.